We begin with the raw amino-acid sequence, 361 residues long: Peptide chain release factor 1 (361 aa).

Gln-233 is modified (N5-methylglutamine). The segment at 282–310 (SKKQAERAQNRKSQVGSGDRSERIRTYNF) is disordered.

Belongs to the prokaryotic/mitochondrial release factor family. In terms of processing, methylated by PrmC. Methylation increases the termination efficiency of RF1.

The protein resides in the cytoplasm. Its function is as follows. Peptide chain release factor 1 directs the termination of translation in response to the peptide chain termination codons UAG and UAA. The sequence is that of Peptide chain release factor 1 from Treponema denticola (strain ATCC 35405 / DSM 14222 / CIP 103919 / JCM 8153 / KCTC 15104).